The chain runs to 128 residues: MTKLLLVAAGGALGSVARYLVGVQALRLFGSNWPYGTFIVNLTGGLLMGLLAAWLALRGGAQQEHWRVLLGVGVMGGFTTFSAFSLETALMIEKRAYAQAFTYTTASVILSVAAIFAGLLIARRIFSV.

Helical transmembrane passes span 4–24, 37–57, 72–92, and 101–121; these read LLLV…VGVQ, TFIV…WLAL, VGVM…ALMI, and FTYT…GLLI. Na(+)-binding residues include Gly-76 and Thr-79.

Belongs to the fluoride channel Fluc/FEX (TC 1.A.43) family.

It localises to the cell inner membrane. The catalysed reaction is fluoride(in) = fluoride(out). With respect to regulation, na(+) is not transported, but it plays an essential structural role and its presence is essential for fluoride channel function. In terms of biological role, fluoride-specific ion channel. Important for reducing fluoride concentration in the cell, thus reducing its toxicity. The chain is Fluoride-specific ion channel FluC from Caulobacter sp. (strain K31).